Reading from the N-terminus, the 237-residue chain is DCN1-like protein 5 (237 aa).

Serine 41 carries the post-translational modification Phosphoserine. The region spanning 46–232 is the DCUN1 domain; the sequence is FSRKKCLAWF…LLDEFVEWQK (187 aa).

As to quaternary structure, part of a complex that contains DCUN1D5, CUL1 and RBX1; this interaction is bridged by CUL1. Interacts (via the DCUN1 domain) with the unneddylated cullins: interacts with CUL1, CUL2, CUL3, CUL4A, CUL4B and CUL5; these interactions promote the cullin neddylation and the identity of the cullin dictates the affinity of the interaction. Interacts (via DCUN1 domain) with UBE2M (N-terminally acetylated form) and probably with UBE2F (N-terminally acetylated form). May also interact with regulators or subunits of cullin-RING ligases such as RBX1, RNF7, ELOB and DDB1; these interactions are bridged by cullins. Interacts with CAND1; this interaction is bridged by cullins and strongly inhibits the neddylation of cullins. These CAND-cullin-DCNL complexes can only be neddylated in the presence of a substrate adapter. Post-translationally, phosphorylation at Ser-41 is independent of cullin's interaction. Phosphorylated in response to both TICAM1 and MYD88 dependent Toll-like receptor (TLR) pathway activation. Phosphorylated in response to IL1B stimulation.

It is found in the nucleus. The protein resides in the cytoplasm. Its subcellular location is the cytoskeleton. The protein localises to the spindle. Functionally, contributes to the neddylation of all cullins by transferring NEDD8 from N-terminally acetylated NEDD8-conjugating E2s enzyme to different cullin C-terminal domain-RBX complexes which is necessary for the activation of cullin-RING E3 ubiquitin ligases (CRLs). May play a role in DNA damage response and may participate in cell proliferation and anchorage-independent cell growth. The chain is DCN1-like protein 5 from Rattus norvegicus (Rat).